We begin with the raw amino-acid sequence, 202 residues long: NADH-quinone oxidoreductase subunit C (202 aa).

It belongs to the complex I 30 kDa subunit family. NDH-1 is composed of 14 different subunits. Subunits NuoB, C, D, E, F, and G constitute the peripheral sector of the complex.

The protein resides in the cell inner membrane. The catalysed reaction is a quinone + NADH + 5 H(+)(in) = a quinol + NAD(+) + 4 H(+)(out). Its function is as follows. NDH-1 shuttles electrons from NADH, via FMN and iron-sulfur (Fe-S) centers, to quinones in the respiratory chain. The immediate electron acceptor for the enzyme in this species is believed to be ubiquinone. Couples the redox reaction to proton translocation (for every two electrons transferred, four hydrogen ions are translocated across the cytoplasmic membrane), and thus conserves the redox energy in a proton gradient. This Brucella canis (strain ATCC 23365 / NCTC 10854 / RM-666) protein is NADH-quinone oxidoreductase subunit C.